The primary structure comprises 476 residues: Dermokine (476 aa).

Residues 1–21 form the signal peptide; sequence MKFQGPLACLLLALCLGSGEA. Composition is skewed to gly residues over residues 153–169, 193–202, 236–259, and 268–298; these read SQGG…GGLG, WGQGGNGGPP, GSGG…GSGS, and SSGG…GSRG. A disordered region spans residues 153–351; sequence SQGGLGGQGQ…ESGIQNSETS (199 aa). The span at 299–315 shows a compositional bias: low complexity; the sequence is DSGSESSWGSSTGSSSG. Residues 316-326 show a composition bias toward gly residues; the sequence is NHGGSGGGNGH.

It belongs to the dermokine family. As to quaternary structure, homooligomer. Seems to be able to homodimerize and homotrimerize. In terms of processing, O-glycosylated. Expressed in epidermis; in the spinous and granular layers and in placenta. Also found in the epithelia of the small intestine, macrophages of the lung and endothelial cells of the lung. Isoform 15 is expressed in epidermis and placenta. Isoform 1 is expressed in epidermis.

Its subcellular location is the secreted. Functionally, may act as a soluble regulator of keratinocyte differentiation. In Homo sapiens (Human), this protein is Dermokine (DMKN).